The sequence spans 360 residues: AA9 family lytic polysaccharide monooxygenase A (360 aa).

The signal sequence occupies residues 1–19; the sequence is MKTSFGLLALAAAAKLVNA. 2 residues coordinate Cu(2+): H20 and H102. An intrachain disulfide couples C62 to C183. H169 is a binding site for O2. Y180 serves as a coordination point for Cu(2+). The interval 254-293 is disordered; it reads TSAASASSTKAPATTAAPVQTESAKPATSTTQAAAPTTLV. The region spanning 322 to 358 is the CBM1 domain; sequence GVVKMYAQCGGMNYSGSTTCESGLTCKQWNPYYHQCV. N-linked (GlcNAc...) asparagine glycosylation occurs at N334.

It belongs to the polysaccharide monooxygenase AA9 family. Cu(2+) is required as a cofactor.

Its subcellular location is the secreted. It catalyses the reaction [(1-&gt;4)-beta-D-glucosyl]n+m + reduced acceptor + O2 = 4-dehydro-beta-D-glucosyl-[(1-&gt;4)-beta-D-glucosyl]n-1 + [(1-&gt;4)-beta-D-glucosyl]m + acceptor + H2O.. Functionally, lytic polysaccharide monooxygenase (LPMO) that depolymerizes crystalline and amorphous polysaccharides via the oxidation of scissile alpha- or beta-(1-4)-glycosidic bonds, yielding C4 oxidation products. Catalysis by LPMOs requires the reduction of the active-site copper from Cu(II) to Cu(I) by a reducing agent and H(2)O(2) or O(2) as a cosubstrate. This Aspergillus terreus (strain NIH 2624 / FGSC A1156) protein is AA9 family lytic polysaccharide monooxygenase A (eglD).